The primary structure comprises 494 residues: 4-trimethylaminobutyraldehyde dehydrogenase (494 aa).

S2 is subject to N-acetylserine. The residue at position 30 (K30) is an N6-acetyllysine; alternate. An N6-succinyllysine; alternate modification is found at K30. Residue K59 is modified to N6-succinyllysine. NAD(+)-binding positions include K180 and 232-236 (GSVPT). E254 functions as the Proton acceptor in the catalytic mechanism. The Nucleophile role is filled by C288. An N6-acetyllysine mark is found at K298 and K344. Residue E391 participates in NAD(+) binding.

The protein belongs to the aldehyde dehydrogenase family. As to quaternary structure, homotetramer.

It is found in the cytoplasm. Its subcellular location is the cytosol. It catalyses the reaction 4-(trimethylamino)butanal + NAD(+) + H2O = 4-(trimethylamino)butanoate + NADH + 2 H(+). The enzyme catalyses an aldehyde + NAD(+) + H2O = a carboxylate + NADH + 2 H(+). The catalysed reaction is 4-aminobutanal + NAD(+) + H2O = 4-aminobutanoate + NADH + 2 H(+). It carries out the reaction formaldehyde + NAD(+) + H2O = formate + NADH + 2 H(+). It catalyses the reaction acetaldehyde + NAD(+) + H2O = acetate + NADH + 2 H(+). The enzyme catalyses imidazole-4-acetaldehyde + NAD(+) + H2O = imidazole-4-acetate + NADH + 2 H(+). The catalysed reaction is acrolein + NAD(+) + H2O = acrylate + NADH + 2 H(+). It carries out the reaction (5-hydroxyindol-3-yl)acetaldehyde + NAD(+) + H2O = (5-hydroxyindol-3-yl)acetate + NADH + 2 H(+). It catalyses the reaction 3,4-dihydroxyphenylacetaldehyde + NAD(+) + H2O = 3,4-dihydroxyphenylacetate + NADH + 2 H(+). The enzyme catalyses spermine monoaldehyde + NAD(+) + H2O = N-(2-carboxyethyl)spermidine + NADH + 2 H(+). The catalysed reaction is propanal + NAD(+) + H2O = propanoate + NADH + 2 H(+). It carries out the reaction butanal + NAD(+) + H2O = butanoate + NADH + 2 H(+). It catalyses the reaction pentanal + NAD(+) + H2O = pentanoate + NADH + 2 H(+). The enzyme catalyses hexanal + NAD(+) + H2O = hexanoate + NADH + 2 H(+). It participates in amine and polyamine biosynthesis; carnitine biosynthesis. Functionally, converts gamma-trimethylaminobutyraldehyde into gamma-butyrobetaine with high efficiency (in vitro). Can catalyze the irreversible oxidation of a broad range of aldehydes to the corresponding acids in an NAD-dependent reaction, but with low efficiency. Catalyzes the oxidation of aldehydes arising from biogenic amines and polyamines. The chain is 4-trimethylaminobutyraldehyde dehydrogenase (ALDH9A1) from Bos taurus (Bovine).